The primary structure comprises 209 residues: Chaperone protein TorD (209 aa).

Belongs to the TorD/DmsD family. TorD subfamily.

It is found in the cytoplasm. Functionally, involved in the biogenesis of TorA. Acts on TorA before the insertion of the molybdenum cofactor and, as a result, probably favors a conformation of the apoenzyme that is competent for acquiring the cofactor. The protein is Chaperone protein TorD of Salmonella bongori (strain ATCC 43975 / DSM 13772 / NCTC 12419).